Here is a 468-residue protein sequence, read N- to C-terminus: ATP synthase subunit beta (468 aa).

155-162 (GGAGVGKT) serves as a coordination point for ATP.

This sequence belongs to the ATPase alpha/beta chains family. In terms of assembly, F-type ATPases have 2 components, CF(1) - the catalytic core - and CF(0) - the membrane proton channel. CF(1) has five subunits: alpha(3), beta(3), gamma(1), delta(1), epsilon(1). CF(0) has three main subunits: a(1), b(2) and c(9-12). The alpha and beta chains form an alternating ring which encloses part of the gamma chain. CF(1) is attached to CF(0) by a central stalk formed by the gamma and epsilon chains, while a peripheral stalk is formed by the delta and b chains.

Its subcellular location is the cell membrane. It carries out the reaction ATP + H2O + 4 H(+)(in) = ADP + phosphate + 5 H(+)(out). Functionally, produces ATP from ADP in the presence of a proton gradient across the membrane. The catalytic sites are hosted primarily by the beta subunits. This chain is ATP synthase subunit beta, found in Bacillus cereus (strain B4264).